Here is an 85-residue protein sequence, read N- to C-terminus: Colicin-E8 immunity protein in ColE6 (85 aa).

The protein belongs to the colicins ColE2/ColE8/ColE9 and pyocins S1/S2 family.

This chain is Colicin-E8 immunity protein in ColE6 (imm), found in Escherichia coli.